The sequence spans 205 residues: Probable molybdenum cofactor guanylyltransferase (205 aa).

Residues 9–11 (LAG), Lys21, Asp66, and Asp95 contribute to the GTP site. Position 95 (Asp95) interacts with Mg(2+).

This sequence belongs to the MobA family. Mg(2+) serves as cofactor.

The protein localises to the cytoplasm. It catalyses the reaction Mo-molybdopterin + GTP + H(+) = Mo-molybdopterin guanine dinucleotide + diphosphate. In terms of biological role, transfers a GMP moiety from GTP to Mo-molybdopterin (Mo-MPT) cofactor (Moco or molybdenum cofactor) to form Mo-molybdopterin guanine dinucleotide (Mo-MGD) cofactor. The protein is Probable molybdenum cofactor guanylyltransferase of Pelotomaculum thermopropionicum (strain DSM 13744 / JCM 10971 / SI).